Consider the following 278-residue polypeptide: Formamidopyrimidine-DNA glycosylase (278 aa).

The Schiff-base intermediate with DNA role is filled by P2. The active-site Proton donor is E3. The active-site Proton donor; for beta-elimination activity is the K57. The DNA site is built by H90, R109, and K150. Residues Q235 to F269 form an FPG-type zinc finger. R259 (proton donor; for delta-elimination activity) is an active-site residue.

This sequence belongs to the FPG family. In terms of assembly, monomer. Requires Zn(2+) as cofactor.

It catalyses the reaction Hydrolysis of DNA containing ring-opened 7-methylguanine residues, releasing 2,6-diamino-4-hydroxy-5-(N-methyl)formamidopyrimidine.. The enzyme catalyses 2'-deoxyribonucleotide-(2'-deoxyribose 5'-phosphate)-2'-deoxyribonucleotide-DNA = a 3'-end 2'-deoxyribonucleotide-(2,3-dehydro-2,3-deoxyribose 5'-phosphate)-DNA + a 5'-end 5'-phospho-2'-deoxyribonucleoside-DNA + H(+). Functionally, involved in base excision repair of DNA damaged by oxidation or by mutagenic agents. Acts as a DNA glycosylase that recognizes and removes damaged bases. Has a preference for oxidized purines, such as 7,8-dihydro-8-oxoguanine (8-oxoG). Has AP (apurinic/apyrimidinic) lyase activity and introduces nicks in the DNA strand. Cleaves the DNA backbone by beta-delta elimination to generate a single-strand break at the site of the removed base with both 3'- and 5'-phosphates. This Yersinia pestis (strain Pestoides F) protein is Formamidopyrimidine-DNA glycosylase.